Here is a 310-residue protein sequence, read N- to C-terminus: Capsid assembly scaffolding protein (310 aa).

Positions 46–102 (VLSDEPTSHNDDPYAAGVDPFADGEDDEGRIQVRISEDGNEAGFDTDGDNSEVETEG) are disordered. Residues 83–102 (DGNEAGFDTDGDNSEVETEG) show a composition bias toward acidic residues.

This sequence belongs to the T7likevirus capsid assembly scaffolding protein family.

Its function is as follows. Scaffolding protein involved in the icosahedric procapsid assembly. Coassembles with the capsid proteins to form the procapsid, in which the scaffolding protein is found within the external shell of icosahedrally arranged capsid protein subunits. In a subsequent step the scaffolding protein molecules are released from the procapsid. Facilitates assembly by binding to gp10 hexamers but not the pentamers and locking them into a morphogenically correct conformation. The protein is Capsid assembly scaffolding protein (9) of Enterobacteria phage T3 (Bacteriophage T3).